The following is a 249-amino-acid chain: tRNA (guanine-N(1)-)-methyltransferase (249 aa).

S-adenosyl-L-methionine-binding positions include Gly-113 and 133–138; that span reads IGDFVL.

This sequence belongs to the RNA methyltransferase TrmD family. Homodimer.

Its subcellular location is the cytoplasm. It carries out the reaction guanosine(37) in tRNA + S-adenosyl-L-methionine = N(1)-methylguanosine(37) in tRNA + S-adenosyl-L-homocysteine + H(+). Its function is as follows. Specifically methylates guanosine-37 in various tRNAs. The chain is tRNA (guanine-N(1)-)-methyltransferase from Photobacterium profundum (strain SS9).